We begin with the raw amino-acid sequence, 1412 residues long: Erbin (1412 aa).

LRR repeat units lie at residues 23–44, 47–68, 70–91, 93–114, 116–137, 139–161, 162–183, 185–206, 208–229, 231–252, 254–275, 277–298, 300–321, 323–344, 346–367, 369–391, and 392–413; these read TVTT…IFTF, TLEE…LFNC, SLHK…IANL, NLRE…IKNC, VLTI…FSQL, NLTQ…GRLT, KLQI…MNRL, QLER…LEQL, GLKE…IGSL, QLTY…ISTC, NLQD…IGSL, NITT…IGGL, SVEE…IGQL, NLRT…IGSW, NITV…MGDM, KLKV…TKLQ, and QLTA…QKET. Residues S440 and S444 each carry the phosphoserine modification. Disordered stretches follow at residues 464-489 and 506-542; these read CDED…PYPD and KDEE…TTTV. Residues 470–480 show a composition bias toward basic and acidic residues; it reads EREAPPREGNL. Y483 carries the post-translational modification Phosphotyrosine. T485 is subject to Phosphothreonine. Residues 506-532 are compositionally biased toward basic and acidic residues; that stretch reads KDEETNEDSGRDLKPHEDQQDINKDVG. Residues 533–542 are compositionally biased toward low complexity; it reads VKTSESTTTV. S569, S598, S602, S603, and S620 each carry phosphoserine. A disordered region spans residues 615–681; the sequence is PLIETSINQP…TDSSQDTSLC (67 aa). Residues 632-641 are compositionally biased toward basic and acidic residues; the sequence is NKKDDTKETD. Positions 650 to 662 are enriched in low complexity; that stretch reads NSNQNNSNCSSPS. Over residues 663-681 the composition is skewed to polar residues; that stretch reads RMSDSVSLNTDSSQDTSLC. Phosphoserine is present on S715. The segment at 803 to 867 is disordered; it reads ETEHLENGNK…PQKSGPVGSV (65 aa). Residues 817–835 are compositionally biased toward polar residues; sequence ESVNKVNGHSEETSQSPNR. 3 positions are modified to phosphoserine: S852, S857, and S872. T917 is subject to Phosphothreonine. Y920 is subject to Phosphotyrosine. S931 carries the phosphoserine modification. Y972 carries the post-translational modification Phosphotyrosine. Disordered regions lie at residues 997-1021 and 1075-1192; these read NPQI…NQSY and QRQS…KSKV. Residues 1075 to 1086 show a composition bias toward polar residues; it reads QRQSSVSSTASV. Y1104 carries the phosphotyrosine modification. A compositionally biased stretch (polar residues) spans 1157–1171; it reads MSVSDFNYSRTSPSK. 3 positions are modified to phosphoserine: S1158, S1179, and S1286. A PDZ domain is found at 1321 to 1410; that stretch reads EIRVRVEKDP…TVELIIVREV (90 aa).

The protein belongs to the LAP (LRR and PDZ) protein family. In terms of assembly, interacts with ERBB2, BPAG1 and ITGB4. May favor the localization of ERBB2, by restricting its presence to the basolateral membrane of epithelial cells. Also found to interact with ARVCF and delta catenin. Interacts (via C-terminus) with DST Isoform 3 (via N-terminus). Interacts with NOD2 (via CARD domain). In terms of tissue distribution, highly expressed in brain, heart, kidney, muscle and stomach, followed by liver, spleen and intestine.

It is found in the cell junction. It localises to the hemidesmosome. Its subcellular location is the nucleus membrane. The protein resides in the basolateral cell membrane. In terms of biological role, acts as an adapter for the receptor ERBB2, in epithelia. By binding the unphosphorylated 'Tyr-1248' of receptor ERBB2, it may contribute to stabilize this unphosphorylated state. Inhibits NOD2-dependent NF-kappa-B signaling and pro-inflammatory cytokine secretion. This chain is Erbin, found in Homo sapiens (Human).